A 162-amino-acid polypeptide reads, in one-letter code: NADH-quinone oxidoreductase subunit I (162 aa).

2 consecutive 4Fe-4S ferredoxin-type domains span residues 53–83 (LRRY…IESE) and 93–122 (TRYD…ETRV). [4Fe-4S] cluster is bound by residues cysteine 63, cysteine 66, cysteine 69, cysteine 73, cysteine 102, cysteine 105, cysteine 108, and cysteine 112.

Belongs to the complex I 23 kDa subunit family. As to quaternary structure, NDH-1 is composed of 14 different subunits. Subunits NuoA, H, J, K, L, M, N constitute the membrane sector of the complex. [4Fe-4S] cluster is required as a cofactor.

It is found in the cell inner membrane. The enzyme catalyses a quinone + NADH + 5 H(+)(in) = a quinol + NAD(+) + 4 H(+)(out). Its function is as follows. NDH-1 shuttles electrons from NADH, via FMN and iron-sulfur (Fe-S) centers, to quinones in the respiratory chain. The immediate electron acceptor for the enzyme in this species is believed to be ubiquinone. Couples the redox reaction to proton translocation (for every two electrons transferred, four hydrogen ions are translocated across the cytoplasmic membrane), and thus conserves the redox energy in a proton gradient. This is NADH-quinone oxidoreductase subunit I from Nitrosomonas eutropha (strain DSM 101675 / C91 / Nm57).